The sequence spans 945 residues: Netrin receptor UNC5B (945 aa).

Residues 1–26 (MRARSGARGALLLALLLCWDPTPSLA) form the signal peptide. The Extracellular segment spans residues 27–377 (GIDSGGQALP…LEPSGDVALY (351 aa)). The Ig-like domain maps to 48–145 (PHFLLEPEDA…SGTTKSRRAY (98 aa)). Intrachain disulfides connect cysteine 69–cysteine 130, cysteine 81–cysteine 128, cysteine 174–cysteine 225, cysteine 258–cysteine 295, cysteine 262–cysteine 299, cysteine 273–cysteine 285, cysteine 314–cysteine 348, cysteine 318–cysteine 353, and cysteine 326–cysteine 338. The region spanning 153–242 (KNFDQEPLAK…KRRSTTATVI (90 aa)) is the Ig-like C2-type domain. A glycan (N-linked (GlcNAc...) asparagine) is linked at asparagine 222. 2 TSP type-1 domains span residues 246–300 (NGGW…TVCP) and 302–354 (DGAW…GLCV). An N-linked (GlcNAc...) asparagine glycan is attached at asparagine 347. A helical transmembrane segment spans residues 378-398 (AGLVVAVFVVLAVLMAVGVIV). Topologically, residues 399 to 945 (YRRNCRDFDT…LVAMTTDGDC (547 aa)) are cytoplasmic. Residue cysteine 403 is the site of S-palmitoyl cysteine attachment. The ZU5 domain occupies 543 to 686 (SSVSGTFGCL…LGTYVFTGES (144 aa)). Residue tyrosine 581 is modified to Phosphotyrosine. The UPA domain stretch occupies residues 689 to 838 (RSAVKRLQLA…AETPAGSLDA (150 aa)). The interaction with DCC stretch occupies residues 707 to 725 (SLEYSLRVYCLEDTPAALK). Residues 865 to 943 (KICNSLDAPN…EMLVAMTTDG (79 aa)) enclose the Death domain.

It belongs to the unc-5 family. In terms of assembly, interacts with the cytoplasmic part of DCC. Interacts with GNAI2 via its cytoplasmic part. Interacts (via death domain) with DAPK1 (via death domain). Interacts (via extracellular domain) with FLRT3 (via extracellular domain); the interaction is direct. Interacts (via extracellular domain) with FLRT2 and FLRT3 (via extracellular domain), but has higher affinity for FLRT3. Identified in a complex with FLRT3 and ADGRL3; does not interact with ADGRL3 by itself. In terms of processing, phosphorylated on cytoplasmic tyrosine residues. Proteolytically cleaved by caspases during apoptosis. The cleavage does not take place when the receptor is associated with netrin ligand. Its cleavage by caspases is required to induce apoptosis. Post-translationally, palmitoylation is required for pro-apoptotic activity, but not for location at lipid rafts. As to expression, mainly expressed in regions of differentiating neurons. Expressed in the developing sensory ganglia that flank the spinal cord from E12, peaking at E14. Expressed in the roof plate region of the spinal cord from E14.

Its subcellular location is the cell membrane. It is found in the membrane raft. Receptor for netrin required for axon guidance. Mediates axon repulsion of neuronal growth cones in the developing nervous system upon ligand binding. Axon repulsion in growth cones may be caused by its association with DCC that may trigger signaling for repulsion. Functions as a netrin receptor that negatively regulates vascular branching during angiogenesis. Mediates retraction of tip cell filopodia on endothelial growth cones in response to netrin. It also acts as a dependence receptor required for apoptosis induction when not associated with netrin ligand. Mediates apoptosis by activating DAPK1. In the absence of NTN1, activates DAPK1 by reducing its autoinhibitory phosphorylation at Ser-308 thereby increasing its catalytic activity. This Rattus norvegicus (Rat) protein is Netrin receptor UNC5B (Unc5b).